The primary structure comprises 311 residues: tRNA-cytidine(32) 2-sulfurtransferase (311 aa).

A PP-loop motif motif is present at residues 47-52 (SGGKDS). [4Fe-4S] cluster is bound by residues cysteine 122, cysteine 125, and cysteine 213.

Belongs to the TtcA family. Homodimer. Mg(2+) is required as a cofactor. It depends on [4Fe-4S] cluster as a cofactor.

It is found in the cytoplasm. The catalysed reaction is cytidine(32) in tRNA + S-sulfanyl-L-cysteinyl-[cysteine desulfurase] + AH2 + ATP = 2-thiocytidine(32) in tRNA + L-cysteinyl-[cysteine desulfurase] + A + AMP + diphosphate + H(+). Its pathway is tRNA modification. In terms of biological role, catalyzes the ATP-dependent 2-thiolation of cytidine in position 32 of tRNA, to form 2-thiocytidine (s(2)C32). The sulfur atoms are provided by the cysteine/cysteine desulfurase (IscS) system. The chain is tRNA-cytidine(32) 2-sulfurtransferase from Escherichia coli (strain K12 / MC4100 / BW2952).